A 312-amino-acid chain; its full sequence is tRNA-dihydrouridine(16) synthase (312 aa).

Residues 7 to 9 (PMQ) and Gln-68 contribute to the FMN site. Catalysis depends on Cys-98, which acts as the Proton donor. FMN contacts are provided by residues Lys-139, 200 to 202 (NGE), and 224 to 225 (GR).

Belongs to the Dus family. DusC subfamily. FMN serves as cofactor.

The catalysed reaction is 5,6-dihydrouridine(16) in tRNA + NADP(+) = uridine(16) in tRNA + NADPH + H(+). The enzyme catalyses 5,6-dihydrouridine(16) in tRNA + NAD(+) = uridine(16) in tRNA + NADH + H(+). Functionally, catalyzes the synthesis of 5,6-dihydrouridine (D), a modified base found in the D-loop of most tRNAs, via the reduction of the C5-C6 double bond in target uridines. Specifically modifies U16 in tRNAs. This chain is tRNA-dihydrouridine(16) synthase, found in Pasteurella multocida (strain Pm70).